The sequence spans 213 residues: Large ribosomal subunit protein uL1 (213 aa).

This sequence belongs to the universal ribosomal protein uL1 family. In terms of assembly, part of the 50S ribosomal subunit.

Its function is as follows. Binds directly to 23S rRNA. Probably involved in E site tRNA release. Protein L1 is also a translational repressor protein, it controls the translation of its operon by binding to its mRNA. This is Large ribosomal subunit protein uL1 from Picrophilus torridus (strain ATCC 700027 / DSM 9790 / JCM 10055 / NBRC 100828 / KAW 2/3).